A 241-amino-acid polypeptide reads, in one-letter code: Protein TraL (241 aa).

It to plasmid R751 TraL.

The sequence is that of Protein TraL (traL) from Escherichia coli.